An 87-amino-acid polypeptide reads, in one-letter code: Large ribosomal subunit protein bL31B (87 aa).

It belongs to the bacterial ribosomal protein bL31 family. Type B subfamily. In terms of assembly, part of the 50S ribosomal subunit.

The polypeptide is Large ribosomal subunit protein bL31B (Shigella boydii serotype 4 (strain Sb227)).